Consider the following 342-residue polypeptide: Cytoplasmic tRNA 2-thiolation protein 1 (342 aa).

The protein belongs to the TtcA family. CTU1/NCS6/ATPBD3 subfamily.

Its subcellular location is the cytoplasm. It participates in tRNA modification; 5-methoxycarbonylmethyl-2-thiouridine-tRNA biosynthesis. In terms of biological role, plays a central role in 2-thiolation of mcm(5)S(2)U at tRNA wobble positions of tRNA(Lys), tRNA(Glu) and tRNA(Gln). Directly binds tRNAs and probably acts by catalyzing adenylation of tRNAs, an intermediate required for 2-thiolation. It is unclear whether it acts as a sulfurtransferase that transfers sulfur from thiocarboxylated URM1 onto the uridine of tRNAs at wobble position. The sequence is that of Cytoplasmic tRNA 2-thiolation protein 1 from Anopheles gambiae (African malaria mosquito).